A 99-amino-acid chain; its full sequence is Ubiquitin-related modifier 1 homolog 2 (99 aa).

Position 99 is a 1-thioglycine (G99). G99 participates in a covalent cross-link: Glycyl lysine isopeptide (Gly-Lys) (interchain with K-? in acceptor proteins).

The protein belongs to the URM1 family. C-terminal thiocarboxylation occurs in 2 steps, it is first acyl-adenylated (-COAMP) via the hesA/moeB/thiF part of the MOCS3 homolog, then thiocarboxylated (-COSH) via the rhodanese domain of the MOCS3 homolog.

The protein localises to the cytoplasm. The protein operates within tRNA modification; 5-methoxycarbonylmethyl-2-thiouridine-tRNA biosynthesis. Its function is as follows. Acts as a sulfur carrier required for 2-thiolation of mcm(5)S(2)U at tRNA wobble positions of cytosolic tRNA(Lys), tRNA(Glu) and tRNA(Gln). Serves as sulfur donor in tRNA 2-thiolation reaction by being thiocarboxylated (-COSH) at its C-terminus by MOCS3. The sulfur is then transferred to tRNA to form 2-thiolation of mcm(5)S(2)U. Also acts as a ubiquitin-like protein (UBL) that is covalently conjugated via an isopeptide bond to lysine residues of target proteins. The thiocarboxylated form serves as substrate for conjugation and oxidative stress specifically induces the formation of UBL-protein conjugates. The protein is Ubiquitin-related modifier 1 homolog 2 of Arabidopsis thaliana (Mouse-ear cress).